Reading from the N-terminus, the 260-residue chain is 3'-5' ssDNA/RNA exonuclease TatD (260 aa).

The a divalent metal cation site is built by E92, H128, and H153.

It belongs to the metallo-dependent hydrolases superfamily. TatD-type hydrolase family. TatD subfamily. As to quaternary structure, monomer. Mg(2+) serves as cofactor.

The protein resides in the cytoplasm. Its function is as follows. 3'-5' exonuclease that prefers single-stranded DNA and RNA. May play a role in the H(2)O(2)-induced DNA damage repair. This chain is 3'-5' ssDNA/RNA exonuclease TatD, found in Yersinia pseudotuberculosis serotype O:3 (strain YPIII).